The chain runs to 548 residues: Chaperonin GroEL (548 aa).

Residues 30–33, Lys-51, 87–91, Gly-415, 479–481, and Asp-495 each bind ATP; these read TLGP, DGTTT, and NAA.

It belongs to the chaperonin (HSP60) family. Forms a cylinder of 14 subunits composed of two heptameric rings stacked back-to-back. Interacts with the co-chaperonin GroES.

Its subcellular location is the cytoplasm. It carries out the reaction ATP + H2O + a folded polypeptide = ADP + phosphate + an unfolded polypeptide.. Functionally, together with its co-chaperonin GroES, plays an essential role in assisting protein folding. The GroEL-GroES system forms a nano-cage that allows encapsulation of the non-native substrate proteins and provides a physical environment optimized to promote and accelerate protein folding. This Salmonella gallinarum (strain 287/91 / NCTC 13346) protein is Chaperonin GroEL.